A 90-amino-acid chain; its full sequence is Small ribosomal subunit protein bS20 (90 aa).

The protein belongs to the bacterial ribosomal protein bS20 family.

Binds directly to 16S ribosomal RNA. The sequence is that of Small ribosomal subunit protein bS20 from Rickettsia akari (strain Hartford).